The chain runs to 273 residues: Pyrroline-5-carboxylate reductase (273 aa).

It belongs to the pyrroline-5-carboxylate reductase family.

It is found in the cytoplasm. The catalysed reaction is L-proline + NADP(+) = (S)-1-pyrroline-5-carboxylate + NADPH + 2 H(+). The enzyme catalyses L-proline + NAD(+) = (S)-1-pyrroline-5-carboxylate + NADH + 2 H(+). Its pathway is amino-acid biosynthesis; L-proline biosynthesis; L-proline from L-glutamate 5-semialdehyde: step 1/1. Its function is as follows. Catalyzes the reduction of 1-pyrroline-5-carboxylate (PCA) to L-proline. This Pseudomonas aeruginosa (strain ATCC 15692 / DSM 22644 / CIP 104116 / JCM 14847 / LMG 12228 / 1C / PRS 101 / PAO1) protein is Pyrroline-5-carboxylate reductase.